We begin with the raw amino-acid sequence, 264 residues long: Thymidylate synthase (264 aa).

DUMP contacts are provided by residues Arg21 and 126–127 (RR). Cys146 functions as the Nucleophile in the catalytic mechanism. Residues 166–169 (RSAD), Asn177, and 207–209 (HLY) each bind dUMP. (6R)-5,10-methylene-5,6,7,8-tetrahydrofolate is bound at residue Asp169. Ala263 is a binding site for (6R)-5,10-methylene-5,6,7,8-tetrahydrofolate.

Belongs to the thymidylate synthase family. Bacterial-type ThyA subfamily. Homodimer.

It is found in the cytoplasm. It catalyses the reaction dUMP + (6R)-5,10-methylene-5,6,7,8-tetrahydrofolate = 7,8-dihydrofolate + dTMP. The protein operates within pyrimidine metabolism; dTTP biosynthesis. In terms of biological role, catalyzes the reductive methylation of 2'-deoxyuridine-5'-monophosphate (dUMP) to 2'-deoxythymidine-5'-monophosphate (dTMP) while utilizing 5,10-methylenetetrahydrofolate (mTHF) as the methyl donor and reductant in the reaction, yielding dihydrofolate (DHF) as a by-product. This enzymatic reaction provides an intracellular de novo source of dTMP, an essential precursor for DNA biosynthesis. In Bradyrhizobium diazoefficiens (strain JCM 10833 / BCRC 13528 / IAM 13628 / NBRC 14792 / USDA 110), this protein is Thymidylate synthase.